Reading from the N-terminus, the 208-residue chain is Ribosomal RNA large subunit methyltransferase E (208 aa).

Residues Gly63, Trp65, Asp83, Asp99, and Asp124 each coordinate S-adenosyl-L-methionine. The active-site Proton acceptor is the Lys164.

The protein belongs to the class I-like SAM-binding methyltransferase superfamily. RNA methyltransferase RlmE family.

It localises to the cytoplasm. The catalysed reaction is uridine(2552) in 23S rRNA + S-adenosyl-L-methionine = 2'-O-methyluridine(2552) in 23S rRNA + S-adenosyl-L-homocysteine + H(+). In terms of biological role, specifically methylates the uridine in position 2552 of 23S rRNA at the 2'-O position of the ribose in the fully assembled 50S ribosomal subunit. This Salmonella choleraesuis (strain SC-B67) protein is Ribosomal RNA large subunit methyltransferase E.